We begin with the raw amino-acid sequence, 242 residues long: Small ribosomal subunit protein uS3 (242 aa).

The 72-residue stretch at 39–110 (IRKFIHKKYG…QVRINVVEVE (72 aa)) folds into the KH type-2 domain. Positions 221 to 242 (GASPRRRASRRPQQFEDRSNEG) are disordered. Positions 233-242 (QQFEDRSNEG) are enriched in basic and acidic residues.

Belongs to the universal ribosomal protein uS3 family. In terms of assembly, part of the 30S ribosomal subunit. Forms a tight complex with proteins S10 and S14.

In terms of biological role, binds the lower part of the 30S subunit head. Binds mRNA in the 70S ribosome, positioning it for translation. This is Small ribosomal subunit protein uS3 from Parasynechococcus marenigrum (strain WH8102).